The following is a 476-amino-acid chain: Serine/threonine-protein kinase Chk1 (476 aa).

An interaction with CLSPN region spans residues 1–265 (MAVPFVEDWD…IPDIKKDRWY (265 aa)). One can recognise a Protein kinase domain in the interval 9-265 (WDLVQTLGEG…IPDIKKDRWY (257 aa)). Residues 15 to 23 (LGEGAYGEV) and Lys-38 each bind ATP. Asp-130 functions as the Proton acceptor in the catalytic mechanism. Lys-132 is covalently cross-linked (Glycyl lysine isopeptide (Lys-Gly) (interchain with G-Cter in ubiquitin)). A disordered region spans residues 267–329 (KPLNRGAKRP…EPRTGLSLWD (63 aa)). The residue at position 280 (Ser-280) is a Phosphoserine; by PKB/AKT1. Residues 280–291 (SGGMSESSSGFS) show a composition bias toward low complexity. Ser-286, Ser-296, and Ser-301 each carry phosphoserine. A compositionally biased stretch (polar residues) spans 298–320 (LDFSPINSGSSEENVKFSSSQPE). Ser-317 and Ser-345 each carry phosphoserine; by ATM and ATR. Residues 391-476 (QCLKETFEKL…SSQKVWFPVT (86 aa)) are autoinhibitory region. A Glycyl lysine isopeptide (Lys-Gly) (interchain with G-Cter in ubiquitin) cross-link involves residue Lys-436. Ser-463, Ser-467, and Ser-468 each carry phosphoserine.

Belongs to the protein kinase superfamily. CAMK Ser/Thr protein kinase family. NIM1 subfamily. In terms of assembly, interacts (phosphorylated by ATR) with RAD51. Interacts with and phosphorylates CLSPN, an adapter protein that regulates the ATR-dependent phosphorylation of CHEK1. Interacts with BRCA1. Interacts with and phosphorylates CDC25A, CDC25B and CDC25C. Interacts with FBXO6, which regulates CHEK1. Interacts with PPM1D, which regulates CHEK1 through dephosphorylation. Interacts with TIMELESS; DNA damage-dependent. Interacts with FEM1B; activates CHEK1 in response to stress. Interacts with TLK1. Interacts with XPO1 and YWHAZ. Interacts with CDK5RAP3; antagonizes CHEK1. Phosphorylated by ATR in a RAD17-dependent manner in response to ultraviolet irradiation and inhibition of DNA replication. Phosphorylated by ATM in response to ionizing irradiation. ATM and ATR can both phosphorylate Ser-317 and Ser-345 and this results in enhanced kinase activity. Phosphorylation at Ser-345 induces a change in the conformation of the protein, activates the kinase activity and is a prerequisite for interaction with FBXO6 and subsequent ubiquitination at Lys-436. Phosphorylation at Ser-345 also increases binding to 14-3-3 proteins and promotes nuclear retention. Conversely, dephosphorylation at Ser-345 by PPM1D may contribute to exit from checkpoint mediated cell cycle arrest. Phosphorylation at Ser-280 by AKT1/PKB, may promote mono and/or diubiquitination. Also phosphorylated at undefined residues during mitotic arrest, resulting in decreased activity. Post-translationally, ubiquitinated. Mono or diubiquitination promotes nuclear exclusion. The activated form (phosphorylated on Ser-345) is polyubiquitinated at Lys-436 by some SCF-type E3 ubiquitin ligase complex containing FBXO6 promoting its degradation. Ubiquitination and degradation are required to terminate the checkpoint and ensure that activated CHEK1 does not accumulate as cells progress through S phase, when replication forks encounter transient impediments during normal DNA replication. 'Lys-63'-mediated ubiquitination by TRAF4 at Lys-132 activates cell cycle arrest and activation of DNA repair. In terms of processing, proteolytically cleaved at the C-terminus by SPRTN during normal DNA replication, thereby promoting CHEK1 removal from chromatin and activating the protein kinase activity. Expressed in brain, heart, liver, lung, skeletal muscle, spleen and testis. In terms of tissue distribution, expressed only in liver.

It localises to the nucleus. The protein resides in the chromosome. The protein localises to the cytoplasm. It is found in the cytoskeleton. Its subcellular location is the microtubule organizing center. It localises to the centrosome. It catalyses the reaction L-seryl-[protein] + ATP = O-phospho-L-seryl-[protein] + ADP + H(+). The enzyme catalyses L-threonyl-[protein] + ATP = O-phospho-L-threonyl-[protein] + ADP + H(+). With respect to regulation, activated through phosphorylation predominantly by ATR but also by ATM in response to DNA damage or inhibition of DNA replication. Activation is modulated by several mediators including CLSPN, BRCA1 and FEM1B. Proteolytic cleavage at the C-terminus by SPRTN during normal DNA replication activates the protein kinase activity. Serine/threonine-protein kinase which is required for checkpoint-mediated cell cycle arrest and activation of DNA repair in response to the presence of DNA damage or unreplicated DNA. May also negatively regulate cell cycle progression during unperturbed cell cycles. This regulation is achieved by a number of mechanisms that together help to preserve the integrity of the genome. Recognizes the substrate consensus sequence [R-X-X-S/T]. Binds to and phosphorylates CDC25A, CDC25B and CDC25C. Phosphorylation of CDC25A at 'Ser-178' and 'Thr-507' and phosphorylation of CDC25C at 'Ser-216' creates binding sites for 14-3-3 proteins which inhibit CDC25A and CDC25C. Phosphorylation of CDC25A at 'Ser-76', 'Ser-124', 'Ser-178', 'Ser-279' and 'Ser-293' promotes proteolysis of CDC25A. Phosphorylation of CDC25A at 'Ser-76' primes the protein for subsequent phosphorylation at 'Ser-79', 'Ser-82' and 'Ser-88' by NEK11, which is required for polyubiquitination and degradation of CDCD25A. Inhibition of CDC25 leads to increased inhibitory tyrosine phosphorylation of CDK-cyclin complexes and blocks cell cycle progression. Also phosphorylates NEK6. Binds to and phosphorylates RAD51 at 'Thr-309', which promotes the release of RAD51 from BRCA2 and enhances the association of RAD51 with chromatin, thereby promoting DNA repair by homologous recombination. Phosphorylates multiple sites within the C-terminus of TP53, which promotes activation of TP53 by acetylation and promotes cell cycle arrest and suppression of cellular proliferation. Also promotes repair of DNA cross-links through phosphorylation of FANCE. Binds to and phosphorylates TLK1 at 'Ser-743', which prevents the TLK1-dependent phosphorylation of the chromatin assembly factor ASF1A. This may enhance chromatin assembly both in the presence or absence of DNA damage. May also play a role in replication fork maintenance through regulation of PCNA. May regulate the transcription of genes that regulate cell-cycle progression through the phosphorylation of histones. Phosphorylates histone H3.1 (to form H3T11ph), which leads to epigenetic inhibition of a subset of genes. May also phosphorylate RB1 to promote its interaction with the E2F family of transcription factors and subsequent cell cycle arrest. Phosphorylates SPRTN, promoting SPRTN recruitment to chromatin. Reduces replication stress and activates the G2/M checkpoint, by phosphorylating and inactivating PABIR1/FAM122A and promoting the serine/threonine-protein phosphatase 2A-mediated dephosphorylation and stabilization of WEE1 levels and activity. This Rattus norvegicus (Rat) protein is Serine/threonine-protein kinase Chk1 (Chek1).